The following is a 396-amino-acid chain: Elongation factor Tu (396 aa).

Positions 10–206 constitute a tr-type G domain; sequence KPHVNVGTIG…ALDNYIPLPE (197 aa). The segment at 19–26 is G1; the sequence is GHVDHGKT. GTP is bound at residue 19–26; the sequence is GHVDHGKT. Thr-26 contacts Mg(2+). The segment at 60–64 is G2; the sequence is GITIN. Residues 81 to 84 are G3; that stretch reads DCPG. GTP is bound by residues 81–85 and 136–139; these read DCPGH and NKCD. The tract at residues 136 to 139 is G4; sequence NKCD. The segment at 174–176 is G5; the sequence is SAK.

The protein belongs to the TRAFAC class translation factor GTPase superfamily. Classic translation factor GTPase family. EF-Tu/EF-1A subfamily. As to quaternary structure, monomer.

Its subcellular location is the cytoplasm. It carries out the reaction GTP + H2O = GDP + phosphate + H(+). GTP hydrolase that promotes the GTP-dependent binding of aminoacyl-tRNA to the A-site of ribosomes during protein biosynthesis. The sequence is that of Elongation factor Tu from Polaromonas naphthalenivorans (strain CJ2).